The chain runs to 477 residues: Glutamate--tRNA ligase 1 (477 aa).

A 'HIGH' region motif is present at residues 12-22 (PSPTGALHLGN). A 'KMSKS' region motif is present at residues 253-257 (PLSKR). Lysine 256 provides a ligand contact to ATP.

It belongs to the class-I aminoacyl-tRNA synthetase family. Glutamate--tRNA ligase type 1 subfamily. In terms of assembly, monomer.

It localises to the cytoplasm. It catalyses the reaction tRNA(Glu) + L-glutamate + ATP = L-glutamyl-tRNA(Glu) + AMP + diphosphate. Catalyzes the attachment of glutamate to tRNA(Glu) in a two-step reaction: glutamate is first activated by ATP to form Glu-AMP and then transferred to the acceptor end of tRNA(Glu). In Halorhodospira halophila (strain DSM 244 / SL1) (Ectothiorhodospira halophila (strain DSM 244 / SL1)), this protein is Glutamate--tRNA ligase 1.